Consider the following 115-residue polypeptide: Variant surface glycoprotein ANTAT 1.8 (115 aa).

A glycan (N-linked (GlcNAc...) asparagine) is linked at Asn-42. Asp-92 carries the GPI-anchor amidated aspartate lipid modification. The propeptide at 93-115 (SSILVNKQLALSVVSAAFAALLF) is removed in mature form.

Its subcellular location is the cell membrane. Functionally, VSG forms a coat on the surface of the parasite. The trypanosome evades the immune response of the host by expressing a series of antigenically distinct VSGs from an estimated 1000 VSG genes. The protein is Variant surface glycoprotein ANTAT 1.8 of Trypanosoma brucei brucei.